A 133-amino-acid polypeptide reads, in one-letter code: Large-conductance mechanosensitive channel (133 aa).

2 helical membrane passes run 14–34 and 67–87; these read VIDL…VSSL and GNFI…FMFV.

This sequence belongs to the MscL family. As to quaternary structure, homopentamer.

The protein resides in the cell membrane. Its function is as follows. Channel that opens in response to stretch forces in the membrane lipid bilayer. May participate in the regulation of osmotic pressure changes within the cell. This chain is Large-conductance mechanosensitive channel, found in Bacillus mycoides (strain KBAB4) (Bacillus weihenstephanensis).